The sequence spans 828 residues: Calpain-A (828 aa).

Positions 1–14 (MDDLRGFLRQAGQE) constitute an EF-hand 1 domain. The Calpain catalytic domain maps to 88–387 (LFEDPLFPAS…FDRVEICNLS (300 aa)). Active-site residues include cysteine 143, histidine 299, and asparagine 327. The domain III stretch occupies residues 388 to 557 (PDSLTEDQQN…TQNNMEENDD (170 aa)). Positions 558 to 577 (HVGYGGKADTITPGFPTPKP) are linker. The interval 578–828 (IDPQKEGLRR…EEWIERTIYS (251 aa)) is domain IV. 4 consecutive EF-hand domains span residues 579-614 (DPQK…SMRD), 699-734 (FSKD…IAKW), 729-764 (SEIA…AGYH), and 764-799 (HLNN…IKTY). Aspartate 712, aspartate 714, serine 716, lysine 718, glutamate 723, aspartate 742, threonine 746, arginine 748, and glutamine 753 together coordinate Ca(2+).

This sequence belongs to the peptidase C2 family. Post-translationally, undergoes calcium-dependent autolytic cleavage between Lys-54 and Asn-55, which is necessary for activation of the protein. In terms of tissue distribution, localized to the anterior and posterior embryonic poles just after fertilization. Becomes distributed around the polar buds and just below the pole cells of the posterior pole during cleavage cycles. During these nuclear divisions anterior localization disappears. Localized to actin caps that underlie the plasma membrane, immediately above each nucleus at cleavage cycles 8 and 9. Localized to a small set of nerve, midgut and blood cells in adults.

The protein localises to the cytoplasm. Activated by millimolar concentrations of calcium, and by phosphatidylinositol 4,5-diphosphate, phosphatidylinositol 4-monophosphate, phosphatidylinositol and phosphatidic acid. In terms of biological role, calcium-regulated non-lysosomal thiol-protease. Involved in the organization of the actin-related cytoskeleton during embryogenesis. The sequence is that of Calpain-A (CalpA) from Drosophila melanogaster (Fruit fly).